A 228-amino-acid polypeptide reads, in one-letter code: MTARRAPAVNRDVLEQMLVDGTAALDIALTDAQRNQLLDYVALLGKWNAVYNLTAIRDPKQMLIQHILDSLSIVPHLRDRASARVLDVGSGGGLPGIVLAIVRPDWQVTLNDIVQKKSAFQTQMRAELKLANLSVVTGRVELLQPGVDVPEKFDMIVSRAFADLSDFVKLARHLVAPGGSIWAMKGVHPDDEIARLPEGSRVKQTMRLAVPMLDAERHLIEVIVDEAN.

S-adenosyl-L-methionine-binding positions include glycine 89, leucine 94, 140-141, and arginine 159; that span reads VE.

Belongs to the methyltransferase superfamily. RNA methyltransferase RsmG family.

It is found in the cytoplasm. It carries out the reaction guanosine(527) in 16S rRNA + S-adenosyl-L-methionine = N(7)-methylguanosine(527) in 16S rRNA + S-adenosyl-L-homocysteine. Specifically methylates the N7 position of guanine in position 527 of 16S rRNA. The protein is Ribosomal RNA small subunit methyltransferase G of Burkholderia ambifaria (strain ATCC BAA-244 / DSM 16087 / CCUG 44356 / LMG 19182 / AMMD) (Burkholderia cepacia (strain AMMD)).